The sequence spans 160 residues: Tumor suppressor ARF (160 aa).

Residues 1–63 (MGRRFVVTVR…RRGPQPHPGP (63 aa)) are interaction with CDK5RAP3 and MDM2. 2 disordered regions span residues 49 to 74 (PERI…QSGS) and 90 to 116 (HPLP…GRGA).

As to quaternary structure, does not interact with cyclins, CDK1, CDK2, CDK4, CDK5 or CDK6. Binds to BCL6, E2F1, HUWE1, MDM2, MYC, NPM1/B23, TOP1/TOPOI and UBE2I/UBC9. Interacts with TBRG1 and COMMD1. Interacts with CDKN2AIP and E4F1. Interacts with CDK5RAP3 and MDM2; form a ternary complex involved in regulation of p53/TP53. Interacts with NOP53; the interaction is direct and promotes ARF nucleoplasmic relocalization and ubiquitin-mediated proteasomal degradation. Interacts with TTF1 (via the N-terminal region (NRD) and a C-terminal region); the interaction is direct and inhibits the nucleolar localization of TTF1. Ubiquitinated in normal cells by TRIP12 via the ubiquitin fusion degradation (UFD) pathway, a process that mediates ubiquitination at the N-terminus, regardless of the absence of lysine residues. Ubiquitination leads to its proteasomal degradation. In cancer cells, however, TRIP12 is located in a different cell compartment, preventing ubiquitination and degradation. In terms of tissue distribution, widely expressed with very low levels in kidney and colon.

The protein localises to the nucleus. Its subcellular location is the nucleolus. It localises to the nucleoplasm. Functionally, capable of inducing cell cycle arrest in G1 and G2 phases. Acts as a tumor suppressor. Binds to MDM2 and blocks its nucleocytoplasmic shuttling by sequestering it in the nucleolus. This inhibits the oncogenic action of MDM2 by blocking MDM2-induced degradation of p53 and enhancing p53-dependent transactivation and apoptosis. Also induces G2 arrest and apoptosis in a p53-independent manner by preventing the activation of cyclin B1/CDC2 complexes. Binds to BCL6 and down-regulates BCL6-induced transcriptional repression. Binds to E2F1 and MYC and blocks their transcriptional activator activity but has no effect on MYC transcriptional repression. Binds to TOP1/TOPOI and stimulates its activity. This complex binds to rRNA gene promoters and may play a role in rRNA transcription and/or maturation. Interacts with NPM1/B23 and promotes its polyubiquitination and degradation, thus inhibiting rRNA processing. Plays a role in inhibiting ribosome biogenesis, perhaps by binding to the nucleolar localization sequence of transcription termination factor TTF1, and thereby preventing nucleolar localization of TTF1. Interacts with COMMD1 and promotes its 'Lys63'-linked polyubiquitination. Interacts with UBE2I/UBC9 and enhances sumoylation of a number of its binding partners including MDM2 and E2F1. Binds to HUWE1 and represses its ubiquitin ligase activity. May play a role in controlling cell proliferation and apoptosis during mammary gland development. The polypeptide is Tumor suppressor ARF (Rattus norvegicus (Rat)).